We begin with the raw amino-acid sequence, 186 residues long: Meiotically up-regulated gene 163 protein (186 aa).

It is found in the mitochondrion. Functionally, has a role in meiosis. This is Meiotically up-regulated gene 163 protein (mug163) from Schizosaccharomyces pombe (strain 972 / ATCC 24843) (Fission yeast).